The sequence spans 179 residues: MSRVGRLPIEIPNGVNVTVTPENVVTVKGPKGELTKAMHEDMNIAVEENNIVVTRPSENVQHKALHGLTRALINNMVVGVTQGYEKTLELVGVGYRAQLKGKDLTLNLGYSHPVEIKAVKGVEYKVPEPTKVVVSGIDKELVGSVAANIRVWRKPEPYKGKGIKYAGEVIRRKEGKTGK.

This sequence belongs to the universal ribosomal protein uL6 family. In terms of assembly, part of the 50S ribosomal subunit.

This protein binds to the 23S rRNA, and is important in its secondary structure. It is located near the subunit interface in the base of the L7/L12 stalk, and near the tRNA binding site of the peptidyltransferase center. The protein is Large ribosomal subunit protein uL6 of Clostridium novyi (strain NT).